The following is an 810-amino-acid chain: Calpain-3 (810 aa).

A compositionally biased stretch (low complexity) spans 9–27 (VAQQTAAGSVPSTTSTTTE). The tract at residues 9–31 (VAQQTAAGSVPSTTSTTTEGTGG) is disordered. In terms of domain architecture, Calpain catalytic spans 68–410 (LYEDPDFPPN…FTKLEICNLT (343 aa)). Catalysis depends on residues Cys123, His327, and Asn351. The tract at residues 411-579 (PDTLEADKLQ…KRSLSEEVEN (169 aa)) is domain III. A disordered region spans residues 578–639 (ENMIEADRPS…SAKAREKSEE (62 aa)). Residues 580-638 (MIEADRPSKKKKGKPIIFVSDRANSNKELTTDEDAGKDGEKTHVDEKKRSSAKAREKSE) are linker. The span at 613–639 (DAGKDGEKTHVDEKKRSSAKAREKSEE) shows a compositional bias: basic and acidic residues. 4 consecutive EF-hand domains span residues 638 to 672 (EEET…VVKK), 681 to 714 (FELE…DKIK), 711 to 746 (DKIK…AGFR), and 776 to 810 (VRLD…TMYA). Residues 639-809 (EETQFRNIFR…VLEWLQLTMY (171 aa)) are domain IV. 18 residues coordinate Ca(2+): Ala651, Asp654, Glu656, Glu661, Asp694, Asp696, Ser698, Lys700, Glu705, Asp724, Asp726, Ser728, Thr730, Glu735, Asp789, Asp791, Asp793, and Ile795.

This sequence belongs to the peptidase C2 family. Homodimer; via EF-hand domain 4. Interacts with TTN/titin. Interacts with CMYA5; this interaction, which results in CMYA5 proteolysis, may protect CAPN3 from autolysis. Interacts with SIMC1. Interacts with UTP25; the interaction is required for CAPN3 translocation to the nucleolus. Skeletal muscle. Low levels in spleen, intestine and bone.

The protein resides in the cytoplasm. Its subcellular location is the nucleus. It is found in the nucleolus. The enzyme catalyses Broad endopeptidase activity.. Activated by micromolar concentrations of calcium and inhibited by calpastatin. Its function is as follows. Calcium-regulated non-lysosomal thiol-protease. Proteolytically cleaves CTBP1. Mediates, with UTP25, the proteasome-independent degradation of p53/TP53. The polypeptide is Calpain-3 (CAPN3) (Gallus gallus (Chicken)).